The chain runs to 256 residues: Carboxysome shell protein CsoS1D (256 aa).

Residues 1-24 (MEPTSSLNRGDRKKGSSLVTGSEV) are disordered. BMC circularly permuted domains are found at residues 55 to 157 (ELRT…RTKP) and 158 to 256 (STSW…ISNY). A Gates the pore motif is present at residues 120 to 121 (ER).

The protein belongs to the EutL/PduB family. Homotrimer. Forms a dimer of stacked trimers, the same faces interact. A CsoS1-CsoS1D-CsoS2 complex can be isolated following expression in E.coli.

It localises to the carboxysome. In terms of biological role, part of the carboxysome shell, a polyhedral inclusion where RuBisCO (ribulose bisphosphate carboxylase, cbbL-cbbS) is sequestered. It may control transport of RuBisCO reactants in and out of the carboxysome. There are estimated to be 6 CsoS1D hexamers per carboxysome. This Prochlorococcus marinus subsp. pastoris (strain CCMP1986 / NIES-2087 / MED4) protein is Carboxysome shell protein CsoS1D.